The primary structure comprises 222 residues: MRVSQSLIPFAIIALVLSFVNAYDPSPLQDFCVAIDDLKGVFVNGRFCKDPERVDAKDFFFSGLNVPGNTNNQVGSNVTTVNVDQIPGLNTMGISLVRIDYAPHGQNPPHTHPRGSEILVLVEGTLYVGFVSSNQDNNRLFAKVLHPGDVFVFPIGMIHFQLNIGKIPAIAFAGLSSQNAGVITIANTVFGSNPPIYPELLARAFQLDANVVKELQAKFGSI.

The signal sequence occupies residues 1–22 (MRVSQSLIPFAIIALVLSFVNA). A disulfide bridge connects residues cysteine 32 and cysteine 48. The Cupin type-1 domain maps to 62-213 (SGLNVPGNTN…AFQLDANVVK (152 aa)). N-linked (GlcNAc...) asparagine glycosylation occurs at asparagine 77. Mn(2+)-binding residues include histidine 110, histidine 112, glutamate 117, and histidine 159.

The protein belongs to the germin family. In terms of assembly, oligomer (believed to be a pentamer but probably hexamer).

The protein localises to the secreted. It is found in the extracellular space. Its subcellular location is the apoplast. Its function is as follows. May play a role in plant defense. Probably has no oxalate oxidase activity even if the active site is conserved. The sequence is that of Germin-like protein subfamily 1 member 16 from Arabidopsis thaliana (Mouse-ear cress).